A 341-amino-acid polypeptide reads, in one-letter code: Phosphate acyltransferase (341 aa).

It belongs to the PlsX family. As to quaternary structure, homodimer. Probably interacts with PlsY.

The protein resides in the cytoplasm. The catalysed reaction is a fatty acyl-[ACP] + phosphate = an acyl phosphate + holo-[ACP]. The protein operates within lipid metabolism; phospholipid metabolism. Catalyzes the reversible formation of acyl-phosphate (acyl-PO(4)) from acyl-[acyl-carrier-protein] (acyl-ACP). This enzyme utilizes acyl-ACP as fatty acyl donor, but not acyl-CoA. This is Phosphate acyltransferase from Vibrio vulnificus (strain CMCP6).